Consider the following 278-residue polypeptide: Phosphonates import ATP-binding protein PhnC (278 aa).

The ABC transporter domain maps to 25 to 273 (LAVKGLVKAY…IIQDIYSDES (249 aa)). 58 to 65 (GRSGAGKS) serves as a coordination point for ATP.

This sequence belongs to the ABC transporter superfamily. Phosphonates importer (TC 3.A.1.9.1) family. As to quaternary structure, the complex is composed of two ATP-binding proteins (PhnC), two transmembrane proteins (PhnE) and a solute-binding protein (PhnD).

The protein resides in the cell inner membrane. It catalyses the reaction phosphonate(out) + ATP + H2O = phosphonate(in) + ADP + phosphate + H(+). In terms of biological role, part of the ABC transporter complex PhnCDE involved in phosphonates import. Responsible for energy coupling to the transport system. This Yersinia pestis bv. Antiqua (strain Antiqua) protein is Phosphonates import ATP-binding protein PhnC.